The primary structure comprises 27 residues: Cupiennin-4a (27 aa).

The residue at position 27 (E27) is a Glutamic acid 1-amide.

Expressed by the venom gland.

It is found in the secreted. The protein is Cupiennin-4a of Cupiennius salei (American wandering spider).